A 502-amino-acid polypeptide reads, in one-letter code: Probable RNA exonuclease C9B6.11c (502 aa).

The tract at residues 338–379 (SELEEKNASTKTENDSNEDDKEECQSSSTSSVPESTASTPKK) is disordered. The span at 341–351 (EEKNASTKTEN) shows a compositional bias: basic and acidic residues. Low complexity predominate over residues 363–376 (SSSTSSVPESTAST).

This sequence belongs to the CCR4/nocturin family.

It is found in the cytoplasm. The protein localises to the nucleus. This chain is Probable RNA exonuclease C9B6.11c, found in Schizosaccharomyces pombe (strain 972 / ATCC 24843) (Fission yeast).